We begin with the raw amino-acid sequence, 473 residues long: Mogroside IIIx synthase (473 aa).

Histidine 43 acts as the Proton acceptor in catalysis. Residue aspartate 142 is the Charge relay of the active site. Positions 293, 356, 374, 375, 376, 379, 395, and 396 each coordinate UDP-alpha-D-glucose.

This sequence belongs to the UDP-glycosyltransferase family. In terms of tissue distribution, highly expressed in mature fruits.

The catalysed reaction is mogroside IIE + UDP-alpha-D-glucose = mogroside IIIX + UDP + H(+). The enzyme catalyses mogroside III + UDP-alpha-D-glucose = mogroside IV + UDP + H(+). It carries out the reaction mogroside III + UDP-alpha-D-glucose = siamenoside I + UDP + H(+). It catalyses the reaction mogroside IIIX + UDP-alpha-D-glucose = mogroside IVA + UDP + H(+). The catalysed reaction is mogroside IIIX + UDP-alpha-D-glucose = siamenoside I + UDP + H(+). The enzyme catalyses mogroside IV + UDP-alpha-D-glucose = mogroside V + UDP + H(+). It carries out the reaction siamenoside I + UDP-alpha-D-glucose = mogroside V + UDP + H(+). It catalyses the reaction mogroside V + UDP-alpha-D-glucose = mogroside VI + UDP + H(+). The protein operates within secondary metabolite biosynthesis; terpenoid biosynthesis. With respect to regulation, activity is increased by Mg(2+). UDP-glycosyltransferase involved in the biosynthesis of cucurbitacin and mogroside tetracyclic triterpene natural products (e.g. siamenoside I and mogrosides IV, V and VI). Cucurbitacins have cytotoxic properties and exhibit deterrent taste as a defense barrier against herbivores. Mogrosides are nonsugar highly oxygenated compounds used as high-intensity zero-calorie sweeteners; they also possess pharmacological properties such as regulating immunity, lowering blood sugar and lipid levels, protecting the liver, and acting as antioxidants and antitumor agents. Its function is as follows. Catalyzes the branched glucosylations of mogroside II-E, mogroside III, mogroside IIIx, mogroside IV, mogroside IV-A, siamenoside I and mogroside V, ending in the production of mogroside VI. In terms of biological role, catalyzes the beta(1-6) branched glucosylations of mogroside II-E to produce mogroside IIIx by forming a beta(1-6) glycosidic bond with the 6-hydroxyl of glucose 1-C24; a subsequent glycosylation at glucose 1-C3 leads to the formation of mogroside IV-A with beta(1-6) glycosidic bond. Can also use mogroside III-E, mogroside III-A, mogroside IV-E and mogroside IV-A as substrates. The protein is Mogroside IIIx synthase of Siraitia grosvenorii (Monk's fruit).